The sequence spans 355 residues: Uroporphyrinogen decarboxylase (355 aa).

Residues 27-31 (RQAGR), Asp-77, Tyr-154, Thr-209, and His-327 contribute to the substrate site.

Belongs to the uroporphyrinogen decarboxylase family. Homodimer.

It is found in the cytoplasm. The enzyme catalyses uroporphyrinogen III + 4 H(+) = coproporphyrinogen III + 4 CO2. It participates in porphyrin-containing compound metabolism; protoporphyrin-IX biosynthesis; coproporphyrinogen-III from 5-aminolevulinate: step 4/4. In terms of biological role, catalyzes the decarboxylation of four acetate groups of uroporphyrinogen-III to yield coproporphyrinogen-III. In Pseudoalteromonas atlantica (strain T6c / ATCC BAA-1087), this protein is Uroporphyrinogen decarboxylase.